Reading from the N-terminus, the 536-residue chain is B3 domain-containing protein Os03g0619800 (536 aa).

A DNA-binding region (TF-B3 1) is located at residues 26–119; that stretch reads MRCFLRRMAA…RYEVLILDSD (94 aa). The interval 138 to 199 is disordered; that stretch reads DKTVDPVDSS…VEPQTPSGSD (62 aa). Low complexity-rich tracts occupy residues 145–160 and 171–183; these read DSSG…SSRS and SSSE…SPSG. The TF-B3 2 DNA-binding region spans 231–330; sequence VAVMKKCNLQ…AFTVHLLQAE (100 aa). Residues 335 to 396 form a disordered region; that stretch reads RDGTDVHKIG…SDGPSEPPYI (62 aa). The segment covering 344–355 has biased composition (polar residues); the sequence is GSSQNKRNSKMA. Over residues 372-382 the composition is skewed to basic and acidic residues; it reads SNKHGVSHESL. Positions 429–529 form a DNA-binding region, TF-B3 3; the sequence is ISKLAGSGGK…TMEVHIISNL (101 aa).

It localises to the nucleus. In Oryza sativa subsp. japonica (Rice), this protein is B3 domain-containing protein Os03g0619800.